A 710-amino-acid polypeptide reads, in one-letter code: Exocyst complex component 5 (710 aa).

Positions 44 to 96 (DTFIQTIKDLKILQEKQQSKCERLEESLRQEKESHAKKIAKLQERHQTAIDVF) form a coiled coil.

Belongs to the SEC10 family. The exocyst complex is composed of Sec3/Exoc1, Sec5/Exoc2, Sec6/Exoc3, Sec8/Exoc4, Sec10/Exoc5, Sec15/Exoc6, Exo70/Exoc7 and Exo84/Exoc8.

In terms of biological role, component of the exocyst complex involved in the docking of exocytic vesicles with fusion sites on the plasma membrane. The sequence is that of Exocyst complex component 5 from Drosophila melanogaster (Fruit fly).